Reading from the N-terminus, the 209-residue chain is Uracil phosphoribosyltransferase (209 aa).

Residues arginine 79, arginine 104, and 131–139 (DPMLATGNS) contribute to the 5-phospho-alpha-D-ribose 1-diphosphate site. Uracil is bound by residues isoleucine 194 and 199-201 (GDA). Aspartate 200 is a binding site for 5-phospho-alpha-D-ribose 1-diphosphate.

It belongs to the UPRTase family. Mg(2+) serves as cofactor.

The catalysed reaction is UMP + diphosphate = 5-phospho-alpha-D-ribose 1-diphosphate + uracil. The protein operates within pyrimidine metabolism; UMP biosynthesis via salvage pathway; UMP from uracil: step 1/1. Its activity is regulated as follows. Allosterically activated by GTP. In terms of biological role, catalyzes the conversion of uracil and 5-phospho-alpha-D-ribose 1-diphosphate (PRPP) to UMP and diphosphate. The polypeptide is Uracil phosphoribosyltransferase (Acidovorax ebreus (strain TPSY) (Diaphorobacter sp. (strain TPSY))).